The chain runs to 131 residues: Sec-independent protein translocase protein TatB (131 aa).

A helical membrane pass occupies residues 2-22; it reads FDGIGFMELLLIGILGLVVLG. Composition is skewed to polar residues over residues 68-83 and 116-131; these read ESQG…QDSI and AEKS…KPNG. The interval 68 to 131 is disordered; the sequence is ESQGLKNLSP…TGANSDKPNG (64 aa).

It belongs to the TatB family. As to quaternary structure, the Tat system comprises two distinct complexes: a TatABC complex, containing multiple copies of TatA, TatB and TatC subunits, and a separate TatA complex, containing only TatA subunits. Substrates initially bind to the TatABC complex, which probably triggers association of the separate TatA complex to form the active translocon.

Its subcellular location is the cell inner membrane. In terms of biological role, part of the twin-arginine translocation (Tat) system that transports large folded proteins containing a characteristic twin-arginine motif in their signal peptide across membranes. Together with TatC, TatB is part of a receptor directly interacting with Tat signal peptides. TatB may form an oligomeric binding site that transiently accommodates folded Tat precursor proteins before their translocation. The polypeptide is Sec-independent protein translocase protein TatB (Shewanella pealeana (strain ATCC 700345 / ANG-SQ1)).